Consider the following 79-residue polypeptide: Sulfur carrier protein TusA (79 aa).

Cysteine 16 acts as the Cysteine persulfide intermediate in catalysis.

The protein belongs to the sulfur carrier protein TusA family.

The protein resides in the cytoplasm. Sulfur carrier protein which probably makes part of a sulfur-relay system. The chain is Sulfur carrier protein TusA from Pseudomonas aeruginosa (strain LESB58).